Here is a 309-residue protein sequence, read N- to C-terminus: Malate dehydrogenase (309 aa).

Residues 8–13 and D33 each bind NAD(+); that span reads GAGLVG. Residues R82 and R88 each contribute to the substrate site. Residues N95 and 118 to 120 contribute to the NAD(+) site; that span reads VSN. Residues N120 and R151 each coordinate substrate. H175 functions as the Proton acceptor in the catalytic mechanism.

It belongs to the LDH/MDH superfamily. MDH type 3 family.

The catalysed reaction is (S)-malate + NAD(+) = oxaloacetate + NADH + H(+). Functionally, catalyzes the reversible oxidation of malate to oxaloacetate. The chain is Malate dehydrogenase from Pseudomonas putida (strain ATCC 700007 / DSM 6899 / JCM 31910 / BCRC 17059 / LMG 24140 / F1).